A 242-amino-acid chain; its full sequence is Probable ergothioneine transport ATP-binding protein EgtUA (242 aa).

The region spanning 2 to 236 (IEYKNVALRY…PATDFVADLF (235 aa)) is the ABC transporter domain. 34–41 (GPSGSGKT) is a binding site for ATP.

Belongs to the ABC transporter superfamily. In terms of assembly, the complex is probably composed of at least an ATP-binding protein (EgtUA) and a transmembrane protein (EgtUBC).

The protein localises to the cell inner membrane. It carries out the reaction ergothioneine(out) + ATP + H2O = ergothioneine(in) + ADP + phosphate + H(+). In terms of biological role, part of an ABC transporter complex EgtU required for the uptake of ergothioneine (EGT), a natural low-molecular weight (LMW) thiol antioxidant. Probably responsible for energy coupling to the transport system. The polypeptide is Probable ergothioneine transport ATP-binding protein EgtUA (Streptococcus pneumoniae serotype 2 (strain D39 / NCTC 7466)).